A 261-amino-acid chain; its full sequence is Calcium-binding protein 8 (261 aa).

Positions 1 to 41 are disordered; it reads MRLPEQPGDGKPENETKGDQETPERGEEPRRSPAPDFPTWE. Topologically, residues 1-234 are cytoplasmic; the sequence is MRLPEQPGDG…QNRQTCVRKS (234 aa). Residues 8–33 show a composition bias toward basic and acidic residues; sequence GDGKPENETKGDQETPERGEEPRRSP. EF-hand domains lie at 78 to 113 and 114 to 149; these read EELD…LGYM and PSEV…KLVS. Ca(2+) is bound by residues D91, D93, N95, E102, D127, D129, D131, Q133, and E138. Residues 235–255 form a helical; Anchor for type IV membrane protein membrane-spanning segment; the sequence is LICAFAMAFIISVMLIAANQI. At 256–261 the chain is on the extracellular side; sequence LRSGME.

In terms of assembly, interacts with PI4KB. This binding competes with FREQ/NCS1 binding in a calcium-dependent manner. Brain-specific. High expression in the cerebellum, hippocampus, and cortex.

The protein localises to the golgi apparatus. It is found in the trans-Golgi network membrane. Its subcellular location is the cytoplasm. The protein resides in the perinuclear region. It localises to the cell membrane. Negatively regulates Golgi-to-plasma membrane trafficking by interacting with PI4KB and inhibiting its activity. May play a role in the physiology of neurons and is potentially important in memory and learning. This is Calcium-binding protein 8 (Caln1) from Mus musculus (Mouse).